Here is a 73-residue protein sequence, read N- to C-terminus: Translation initiation factor IF-1 (73 aa).

Residues 1–72 form the S1-like domain; that stretch reads MAKEDHIEMA…SKGRIIFRDK (72 aa).

Belongs to the IF-1 family. In terms of assembly, component of the 30S ribosomal translation pre-initiation complex which assembles on the 30S ribosome in the order IF-2 and IF-3, IF-1 and N-formylmethionyl-tRNA(fMet); mRNA recruitment can occur at any time during PIC assembly.

Its subcellular location is the cytoplasm. One of the essential components for the initiation of protein synthesis. Stabilizes the binding of IF-2 and IF-3 on the 30S subunit to which N-formylmethionyl-tRNA(fMet) subsequently binds. Helps modulate mRNA selection, yielding the 30S pre-initiation complex (PIC). Upon addition of the 50S ribosomal subunit IF-1, IF-2 and IF-3 are released leaving the mature 70S translation initiation complex. The protein is Translation initiation factor IF-1 of Legionella pneumophila (strain Paris).